The sequence spans 199 residues: dITP/XTP pyrophosphatase (199 aa).

Substrate is bound at residue 8 to 13; it reads TSNKNK. Residues Glu-40 and Asp-68 each contribute to the Mg(2+) site. The Proton acceptor role is filled by Asp-68. Residues Ser-69, 154–157, Lys-177, and 182–183 each bind substrate; these read FGYD and HR.

The protein belongs to the HAM1 NTPase family. Homodimer. Requires Mg(2+) as cofactor.

The enzyme catalyses XTP + H2O = XMP + diphosphate + H(+). The catalysed reaction is dITP + H2O = dIMP + diphosphate + H(+). It catalyses the reaction ITP + H2O = IMP + diphosphate + H(+). Its function is as follows. Pyrophosphatase that catalyzes the hydrolysis of nucleoside triphosphates to their monophosphate derivatives, with a high preference for the non-canonical purine nucleotides XTP (xanthosine triphosphate), dITP (deoxyinosine triphosphate) and ITP. Seems to function as a house-cleaning enzyme that removes non-canonical purine nucleotides from the nucleotide pool, thus preventing their incorporation into DNA/RNA and avoiding chromosomal lesions. This chain is dITP/XTP pyrophosphatase, found in Wigglesworthia glossinidia brevipalpis.